The following is a 797-amino-acid chain: Adhesion G-protein coupled receptor G7 (797 aa).

A signal peptide spans 1 to 26 (MASCRAWNLRVLVAVVCGLLTGIILG). The Extracellular segment spans residues 27-438 (LGIWRIVIRI…QYPKSLDILS (412 aa)). N-linked (GlcNAc...) asparagine glycosylation is found at Asn82, Asn159, Asn178, Asn191, Asn247, Asn261, Asn312, Asn316, and Asn387. One can recognise a GAIN-B domain in the interval 275–428 (FSVQKGASSS…AVLMTFKKDY (154 aa)). 2 cysteine pairs are disulfide-bonded: Cys383/Cys410 and Cys398/Cys412. The tract at residues 383-428 (CVYWNLSAKDWDTYGCQKDKGTDGFLRCRCNHTTNFAVLMTFKKDY) is GPS. Residue Asn413 is glycosylated (N-linked (GlcNAc...) asparagine). The helical transmembrane segment at 439–459 (NVGCALSVTGLALTVIFQIVT) threads the bilayer. Residues 460–468 (RKVRKTSVT) lie on the Cytoplasmic side of the membrane. A helical membrane pass occupies residues 469 to 489 (WVLVNLCISMLIFNLLFVFGI). The Extracellular segment spans residues 490-528 (ENSNKNLQTSDGDINNIDFDNNDIPRTDTINIPNPMCTA). A helical membrane pass occupies residues 529-549 (IAALLHYFLLVTFTWNALSAA). The Cytoplasmic segment spans residues 550 to 565 (QLYYLLIRTMKPLPRH). A helical transmembrane segment spans residues 566-586 (FILFISLIGWGVPAIVVAITV). At 587–623 (GVIYSQNGNNPQWELDYRQEKICWLAIPEPNGVIKSP) the chain is on the extracellular side. Residues 624–644 (LLWSFIVPVTIILISNVVMFI) traverse the membrane as a helical segment. Topologically, residues 645–669 (TISIKVLWKNNQNLTSTKKVSSMKK) are cytoplasmic. A helical transmembrane segment spans residues 670–690 (IVSTLSVAVVFGITWILAYLM). Over 691-698 (LVNDDSIR) the chain is Extracellular. A helical membrane pass occupies residues 699–719 (IVFSYIFCLFNTTQGLQIFIL). The Cytoplasmic segment spans residues 720 to 797 (YTVRTKVFQS…SESDNAKESI (78 aa)).

The protein belongs to the G-protein coupled receptor 2 family. Adhesion G-protein coupled receptor (ADGR) subfamily.

The protein localises to the membrane. Orphan receptor. The polypeptide is Adhesion G-protein coupled receptor G7 (ADGRG7) (Homo sapiens (Human)).